The sequence spans 235 residues: Lipoprotein signal peptidase (235 aa).

The interval 1-23 (MTDETSGPAEPVTDAPGDAESPA) is disordered. Helical transmembrane passes span 31–51 (LLLT…VLAV), 84–104 (GYTW…IWMG), and 108–128 (VSPW…GNLV). Catalysis depends on residues Asp-144 and Asp-158. Residues 156-176 (VADPSVVGGAILLVALSLFGF) form a helical membrane-spanning segment. The interval 185 to 235 (RPGEDAEPSAGASDSTPEAPAADGPDKPAGPVGPEDAAEESKTVGHQAEPS) is disordered. Positions 201-218 (PEAPAADGPDKPAGPVGP) are enriched in low complexity.

This sequence belongs to the peptidase A8 family.

It localises to the cell membrane. The catalysed reaction is Release of signal peptides from bacterial membrane prolipoproteins. Hydrolyzes -Xaa-Yaa-Zaa-|-(S,diacylglyceryl)Cys-, in which Xaa is hydrophobic (preferably Leu), and Yaa (Ala or Ser) and Zaa (Gly or Ala) have small, neutral side chains.. Its pathway is protein modification; lipoprotein biosynthesis (signal peptide cleavage). Its function is as follows. This protein specifically catalyzes the removal of signal peptides from prolipoproteins. The sequence is that of Lipoprotein signal peptidase from Mycolicibacterium smegmatis (strain ATCC 700084 / mc(2)155) (Mycobacterium smegmatis).